A 1412-amino-acid polypeptide reads, in one-letter code: DNA-directed RNA polymerase subunit beta' (1412 aa).

Zn(2+) contacts are provided by Cys70, Cys72, Cys85, and Cys88. Residues Asp460, Asp462, and Asp464 each coordinate Mg(2+). The Zn(2+) site is built by Cys819, Cys893, Cys900, and Cys903. Positions 1392–1412 are disordered; it reads EEAFEFGTPSTPAEEPQHPAE.

It belongs to the RNA polymerase beta' chain family. In terms of assembly, the RNAP catalytic core consists of 2 alpha, 1 beta, 1 beta' and 1 omega subunit. When a sigma factor is associated with the core the holoenzyme is formed, which can initiate transcription. Mg(2+) is required as a cofactor. The cofactor is Zn(2+).

The enzyme catalyses RNA(n) + a ribonucleoside 5'-triphosphate = RNA(n+1) + diphosphate. Functionally, DNA-dependent RNA polymerase catalyzes the transcription of DNA into RNA using the four ribonucleoside triphosphates as substrates. In Burkholderia thailandensis (strain ATCC 700388 / DSM 13276 / CCUG 48851 / CIP 106301 / E264), this protein is DNA-directed RNA polymerase subunit beta'.